A 67-amino-acid chain; its full sequence is Large ribosomal subunit protein bL32 (67 aa).

Residues 1 to 19 (MAVPKRKMSRSNTRARRSQ) show a composition bias toward basic residues. A disordered region spans residues 1-21 (MAVPKRKMSRSNTRARRSQWK).

Belongs to the bacterial ribosomal protein bL32 family.

In Clavibacter sepedonicus (Clavibacter michiganensis subsp. sepedonicus), this protein is Large ribosomal subunit protein bL32.